We begin with the raw amino-acid sequence, 265 residues long: Hydroxyethylthiazole kinase (265 aa).

A substrate-binding site is contributed by Met-43. The ATP site is built by Arg-119 and Ser-165. Ala-192 contributes to the substrate binding site.

This sequence belongs to the Thz kinase family. Requires Mg(2+) as cofactor.

The enzyme catalyses 5-(2-hydroxyethyl)-4-methylthiazole + ATP = 4-methyl-5-(2-phosphooxyethyl)-thiazole + ADP + H(+). The protein operates within cofactor biosynthesis; thiamine diphosphate biosynthesis; 4-methyl-5-(2-phosphoethyl)-thiazole from 5-(2-hydroxyethyl)-4-methylthiazole: step 1/1. In terms of biological role, catalyzes the phosphorylation of the hydroxyl group of 4-methyl-5-beta-hydroxyethylthiazole (THZ). The sequence is that of Hydroxyethylthiazole kinase from Haemophilus influenzae (strain 86-028NP).